Consider the following 264-residue polypeptide: Myozenin-2 (264 aa).

The residue at position 53 (arginine 53) is an Omega-N-methylarginine. Residues 90 to 135 (GRVDGSNLEGGSQQGPSTPPNTPDPRSPPNPENIAPGYSGPLKEIP) are disordered. Position 101 is a phosphoserine (serine 101). A compositionally biased stretch (pro residues) spans 106 to 120 (STPPNTPDPRSPPNP). 2 positions are modified to phosphothreonine: threonine 107 and threonine 111. Serine 116 carries the phosphoserine modification.

It belongs to the myozenin family. In terms of assembly, interacts via its C-terminus with spectrin repeats 3 and 4 of ACTN2. Interacts with ACTN1, LDB3, MYOT and PPP3CA. Expressed specifically in heart and skeletal muscle. In skeletal muscle, localized to the soleus and plantaris muscles, which are predominantly composed of slow-twitch fibers.

Its subcellular location is the cytoplasm. It is found in the myofibril. The protein localises to the sarcomere. The protein resides in the z line. Its function is as follows. Myozenins may serve as intracellular binding proteins involved in linking Z line proteins such as alpha-actinin, gamma-filamin, TCAP/telethonin, LDB3/ZASP and localizing calcineurin signaling to the sarcomere. Plays an important role in the modulation of calcineurin signaling. May play a role in myofibrillogenesis. The polypeptide is Myozenin-2 (Mus musculus (Mouse)).